The following is a 1150-amino-acid chain: MAVPARTCGASRPGPARTARPWPGCGPHPGPGTRRPTSGPPRPLWLLLPLLPLLAAPGASAYSFPQQHTMQHWARRLEQEVDGVMRIFGGVQQLREIYKDNRNLFEVQENEPQKLVEKVAGDIESLLDRKVQALKRLADAAENFQKAHRWQDNIKEEDIVYYDAKADAELDDPESEDVERGSKASTLRLDFIEDPNFKNKVNYSYAAVQIPTDIYKGSTVILNELNWTEALENVFMENRRQDPTLLWQVFGSATGVTRYYPATPWRAPKKIDLYDVRRRPWYIQGASSPKDMVIIVDVSGSVSGLTLKLMKTSVCEMLDTLSDDDYVNVASFNEKAQPVSCFTHLVQANVRNKKVFKEAVQGMVAKGTTGYKAGFEYAFDQLQNSNITRANCNKMIMMFTDGGEDRVQDVFEKYNWPNRTVRVFTFSVGQHNYDVTPLQWMACANKGYYFEIPSIGAIRINTQEYLDVLGRPMVLAGKEAKQVQWTNVYEDALGLGLVVTGTLPVFNLTQDGPGEKKNQLILGVMGIDVALNDIKRLTPNYTLGANGYVFAIDLNGYVLLHPNLKPQTTNFREPVTLDFLDAELEDENKEEIRRSMIDGNKGHKQIRTLVKSLDERYIDEVTRNYTWVPIRSTNYSLGLVLPPYSTFYLQANLSDQILQVKLPISKLKDFEFLLPSSFESEGHVFIAPREYCKDLNASDNNTEFLKNFIELMEKVTPDSKQCNNFLLHNLILDTGITQQLVERVWRDQDLNTYSLLAVFAATDGGITRVFPNKAAEDWTENPEPFNASFYRRSLDNHGYVFKPPHQDALLRPLELENDTVGILVSTAVELSLGRRTLRPAVVGVKLDLEAWAEKFKVLASNRTHQDQPQKCGPNSHCEMDCEVNNEDLLCVLIDDGGFLVLSNQNHQWDQVGRFFSEVDANLMLALYNNSFYTRKESYDYQAACAPQPPGNLGAAPRGVFVPTVADFLNLAWWTSAAAWSLFQQLLYGLIYHSWFQADPAEAEGSPETRESSCVMKQTQYYFGSVNASYNAIIDCGNCSRLFHAQRLTNTNLLFVVAEKPLCSQCEAGRLLQKETHSDGPEQCELVQRPRYRRGPHICFDYNATEDTSDCGRGASFPPSLGVLVSLQLLLLLGLPPRPQPQVLVHASRRL.

Positions 1–18 (MAVPARTCGASRPGPART) are cleaved as a signal peptide. Residues 1–41 (MAVPARTCGASRPGPARTARPWPGCGPHPGPGTRRPTSGPP) form a disordered region. Topologically, residues 19–1113 (ARPWPGCGPH…TEDTSDCGRG (1095 aa)) are extracellular. Positions 291–469 (DMVIIVDVSG…INTQEYLDVL (179 aa)) constitute a VWFA domain. Residues Asp-297, Ser-299, and Ser-301 each coordinate a divalent metal cation. The MIDAS-like motif signature appears at 297-301 (DVSGS). N-linked (GlcNAc...) asparagine glycosylation is found at Asn-386, Asn-418, Asn-507, Asn-540, Asn-624, and Asn-861. A disulfide bridge connects residues Cys-443 and Cys-1098. Residues 485-574 (WTNVYEDALG…KPQTTNFREP (90 aa)) form the Cache domain. Residues 1114 to 1134 (ASFPPSLGVLVSLQLLLLLGL) traverse the membrane as a helical segment. The Cytoplasmic portion of the chain corresponds to 1135-1150 (PPRPQPQVLVHASRRL).

This sequence belongs to the calcium channel subunit alpha-2/delta family. In terms of assembly, dimer formed of alpha-2-2 and delta-2 chains; disulfide-linked. Voltage-dependent calcium channels are multisubunit complexes, consisting of alpha-1 (CACNA1), alpha-2 (CACNA2D), beta (CACNB) and delta (CACNA2D) subunits in a 1:1:1:1 ratio. May be proteolytically processed into subunits alpha-2-2 and delta-2 that are disulfide-linked. It is however unclear whether such cleavage really takes place in vivo and has a functional role. Predominantly present in cerebellar cortex. Present in various lung tumor cell lines, while it is absent in normal lung (at protein level). Highly expressed in heart, lung, testis, pancreas and skeletal muscle. Also expressed in kidney, liver, placenta and brain.

Its subcellular location is the membrane. Functionally, the alpha-2/delta subunit of voltage-dependent calcium channels regulates calcium current density and activation/inactivation kinetics of the calcium channel. Acts as a regulatory subunit for P/Q-type calcium channel (CACNA1A), N-type (CACNA1B), L-type (CACNA1C OR CACNA1D) and possibly T-type (CACNA1G). Overexpression induces apoptosis. The sequence is that of Voltage-dependent calcium channel subunit alpha-2/delta-2 (CACNA2D2) from Homo sapiens (Human).